The sequence spans 340 residues: Alcohol dehydrogenase (340 aa).

Residues cysteine 37, histidine 58, cysteine 89, cysteine 92, cysteine 95, cysteine 103, and cysteine 145 each contribute to the Zn(2+) site.

This sequence belongs to the zinc-containing alcohol dehydrogenase family. The cofactor is Zn(2+).

The catalysed reaction is a primary alcohol + NAD(+) = an aldehyde + NADH + H(+). It carries out the reaction a secondary alcohol + NAD(+) = a ketone + NADH + H(+). The polypeptide is Alcohol dehydrogenase (adh) (Staphylococcus epidermidis (strain ATCC 35984 / DSM 28319 / BCRC 17069 / CCUG 31568 / BM 3577 / RP62A)).